The following is a 284-amino-acid chain: Phosphatidylserine decarboxylase proenzyme (284 aa).

Catalysis depends on charge relay system; for autoendoproteolytic cleavage activity residues D88, H145, and S251. The active-site Schiff-base intermediate with substrate; via pyruvic acid; for decarboxylase activity is the S251. S251 is modified (pyruvic acid (Ser); by autocatalysis).

Belongs to the phosphatidylserine decarboxylase family. PSD-B subfamily. Prokaryotic type I sub-subfamily. Heterodimer of a large membrane-associated beta subunit and a small pyruvoyl-containing alpha subunit. Pyruvate is required as a cofactor. In terms of processing, is synthesized initially as an inactive proenzyme. Formation of the active enzyme involves a self-maturation process in which the active site pyruvoyl group is generated from an internal serine residue via an autocatalytic post-translational modification. Two non-identical subunits are generated from the proenzyme in this reaction, and the pyruvate is formed at the N-terminus of the alpha chain, which is derived from the carboxyl end of the proenzyme. The autoendoproteolytic cleavage occurs by a canonical serine protease mechanism, in which the side chain hydroxyl group of the serine supplies its oxygen atom to form the C-terminus of the beta chain, while the remainder of the serine residue undergoes an oxidative deamination to produce ammonia and the pyruvoyl prosthetic group on the alpha chain. During this reaction, the Ser that is part of the protease active site of the proenzyme becomes the pyruvoyl prosthetic group, which constitutes an essential element of the active site of the mature decarboxylase.

The protein localises to the cell membrane. It catalyses the reaction a 1,2-diacyl-sn-glycero-3-phospho-L-serine + H(+) = a 1,2-diacyl-sn-glycero-3-phosphoethanolamine + CO2. The protein operates within phospholipid metabolism; phosphatidylethanolamine biosynthesis; phosphatidylethanolamine from CDP-diacylglycerol: step 2/2. In terms of biological role, catalyzes the formation of phosphatidylethanolamine (PtdEtn) from phosphatidylserine (PtdSer). The sequence is that of Phosphatidylserine decarboxylase proenzyme from Polaromonas sp. (strain JS666 / ATCC BAA-500).